We begin with the raw amino-acid sequence, 874 residues long: Alanine--tRNA ligase (874 aa).

Residues His562, His566, Cys665, and His669 each contribute to the Zn(2+) site.

The protein belongs to the class-II aminoacyl-tRNA synthetase family. The cofactor is Zn(2+).

The protein localises to the cytoplasm. The catalysed reaction is tRNA(Ala) + L-alanine + ATP = L-alanyl-tRNA(Ala) + AMP + diphosphate. In terms of biological role, catalyzes the attachment of alanine to tRNA(Ala) in a two-step reaction: alanine is first activated by ATP to form Ala-AMP and then transferred to the acceptor end of tRNA(Ala). Also edits incorrectly charged Ser-tRNA(Ala) and Gly-tRNA(Ala) via its editing domain. In Pseudomonas syringae pv. tomato (strain ATCC BAA-871 / DC3000), this protein is Alanine--tRNA ligase.